The chain runs to 170 residues: Vimentin A1 (170 aa).

Positions 1-10 (DLTEAANKSN) are enriched in polar residues. Residues 1–20 (DLTEAANKSNEALRLAKQES) form a disordered region. Residues 1 to 111 (DLTEAANKSN…ATYRKLLEGE (111 aa)) form a coil 2 region. The 115-residue stretch at 1 to 115 (DLTEAANKSN…KLLEGEESRI (115 aa)) folds into the IF rod domain. A tail region spans residues 112–170 (ESRISTPLPNFSSFNLRETMLELKPNIESTFTKKVLIKTIETRDGQVLNESTQNHDDLE).

It belongs to the intermediate filament family. In terms of assembly, homomer. Post-translationally, one of the most prominent phosphoproteins in various cells of mesenchymal origin. Phosphorylation is enhanced during cell division, at which time vimentin filaments are significantly reorganized. Expressed in low amounts in retina, optic nerve, and brain and in higher amounts in spinal cord.

Its function is as follows. Vimentins are class-III intermediate filaments found in various non-epithelial cells, especially mesenchymal cells. Vimentin is attached to the nucleus, endoplasmic reticulum, and mitochondria, either laterally or terminally. The polypeptide is Vimentin A1 (Carassius auratus (Goldfish)).